The primary structure comprises 209 residues: Thymidine kinase (209 aa).

Residues 25–32 and 103–106 each bind ATP; these read GCMFAGKT and DEVQ. E104 functions as the Proton acceptor in the catalytic mechanism. Positions 160, 163, 198, and 201 each coordinate Zn(2+).

The protein belongs to the thymidine kinase family. In terms of assembly, homotetramer.

It is found in the cytoplasm. The enzyme catalyses thymidine + ATP = dTMP + ADP + H(+). This is Thymidine kinase from Mycoplasma mycoides subsp. mycoides SC (strain CCUG 32753 / NCTC 10114 / PG1).